The chain runs to 216 residues: V-type ATP synthase subunit D (216 aa).

This sequence belongs to the V-ATPase D subunit family.

Its function is as follows. Produces ATP from ADP in the presence of a proton gradient across the membrane. This Clostridium botulinum (strain Loch Maree / Type A3) protein is V-type ATP synthase subunit D.